Consider the following 554-residue polypeptide: MTSGPHNLEDPIVRAIRQKNQAPSHDFTIFVQEDGSSVSTLDRVVKNVQAPATYIPTDVEFFDINEPDKPDLHFLRNHFIREGRLSEEQTLYIIKKATEILKSEDNLIEVDAPVTVCGDIHGQYYDLMKLFEVGGNPANTQYLFLGDYVDRGYFSIECLLYLWALKIWYPKTLWLLRGNHECAHLTDYFTFKLECTHKYNIKVYEACLQSFNALPLAAIMNKQFLCVHGGLSPELHTLNDIRMINRFCEPPTHGLMCDLLWSDPLEDFGSEKSNKHFIHNNVRGCSYFYSYQAVCTFLENNNLLSVIRAHEAQDVGYRMYRKTKTTGFPSLMTIFSAPNYLDVYNNKAAVLKYENNVMNIRQFNCSPHPYWLPNFMDVFTWSLPFVGEKVSEMLISMLNICSKEELYETDLKESAPTQHKQPAPSENENKADQEIDIEARRQIIKNKIMAIGRISRVFSVLREERESVSELKNVSGTQRLPAGTLMLGAEGIKNAINSFDDARKLDIQNERLPPSNSRRRSTDLKAFEEVMNSSEDDTSIDHLVERFADKKSSL.

Fe cation is bound by residues D119, H121, and D147. 2 residues coordinate Zn(2+): D147 and N179. H180 serves as the catalytic Proton donor. Positions 228 and 310 each coordinate Zn(2+). A disordered region spans residues L411–Q433. The span at A415–E426 shows a compositional bias: polar residues.

This sequence belongs to the PPP phosphatase family. PP-2B subfamily. In terms of assembly, composed of two components (A and B), the A component is the catalytic subunit and the B component confers calcium sensitivity. It depends on Fe(3+) as a cofactor. Zn(2+) is required as a cofactor.

It catalyses the reaction O-phospho-L-seryl-[protein] + H2O = L-seryl-[protein] + phosphate. The enzyme catalyses O-phospho-L-threonyl-[protein] + H2O = L-threonyl-[protein] + phosphate. Its function is as follows. Calcium-dependent, calmodulin-stimulated protein phosphatase. This subunit may have a role in the calmodulin activation of calcineurin. Appears to be involved in cytokinesis, mating, transport, nuclear and spindle pole body positioning, and cell shape. This is Serine/threonine-protein phosphatase 2B catalytic subunit (ppb1) from Schizosaccharomyces pombe (strain 972 / ATCC 24843) (Fission yeast).